Reading from the N-terminus, the 501-residue chain is Type II secretion system protein E (501 aa).

Position 262-269 (262-269) interacts with ATP; sequence GPTGSGKS. Residues cysteine 395, cysteine 398, cysteine 428, and cysteine 431 each contribute to the Zn(2+) site.

The protein belongs to the GSP E family. As to quaternary structure, forms homooligomers; most probably hexamers. Interacts with ExeL/GspL. Zn(2+) is required as a cofactor.

The protein localises to the cell inner membrane. It catalyses the reaction ATP + H2O + cellular proteinSide 1 = ADP + phosphate + cellular proteinSide 2.. In terms of biological role, ATPase component of the type II secretion system required for the energy-dependent secretion of extracellular factors such as proteases and toxins from the periplasm. Acts as a molecular motor to provide the energy that is required for assembly of the pseudopilus and the extrusion of substrates generated in the cytoplasm. The protein is Type II secretion system protein E (exeE) of Aeromonas hydrophila.